Consider the following 133-residue polypeptide: Helix-loop-helix protein 1 (133 aa).

A disordered region spans residues 1–79; that stretch reads MMLNSDTMEL…RRATAKYRTA (79 aa). The span at 25–45 shows a compositional bias: gly residues; it reads DCGGGAGPDGAGPGGPGGGQA. Positions 52–65 are enriched in basic and acidic residues; it reads EPGRKDLQHLSREE. Basic residues predominate over residues 66-79; sequence RRRRRRATAKYRTA. The region spanning 75–127 is the bHLH domain; the sequence is KYRTAHATRERIRVEAFNLAFAELRKLLPTLPPDKKLSKIEILRLAICYISYL.

Efficient DNA binding requires dimerization with another bHLH protein.

It is found in the nucleus. Functionally, may serve as DNA-binding protein and may be involved in the control of cell-type determination, possibly within the developing nervous system. The chain is Helix-loop-helix protein 1 (NHLH1) from Homo sapiens (Human).